The following is an 880-amino-acid chain: Leucine--tRNA ligase (880 aa).

The 'HIGH' region signature appears at 46 to 56 (PYPSGALHMGH). Residues 638 to 642 (KMSKS) carry the 'KMSKS' region motif. Lys-641 contacts ATP.

This sequence belongs to the class-I aminoacyl-tRNA synthetase family.

The protein resides in the cytoplasm. The catalysed reaction is tRNA(Leu) + L-leucine + ATP = L-leucyl-tRNA(Leu) + AMP + diphosphate. This chain is Leucine--tRNA ligase, found in Stenotrophomonas maltophilia (strain R551-3).